The following is a 143-amino-acid chain: Small ribosomal subunit protein uS12 (143 aa).

The segment covering methionine 1–aspartate 19 has biased composition (basic residues). Residues methionine 1–alanine 23 are disordered. Position 62 is a 3-hydroxyproline (proline 62).

Belongs to the universal ribosomal protein uS12 family. In terms of assembly, component of the 40S small ribosomal subunit. Post-translationally, hydroxylation at Pro-62 affects translation termination efficiency.

It localises to the cytoplasm. The protein resides in the cytosol. Its subcellular location is the rough endoplasmic reticulum. In Drosophila melanogaster (Fruit fly), this protein is Small ribosomal subunit protein uS12 (RpS23).